We begin with the raw amino-acid sequence, 58 residues long: Light-harvesting protein B-870 alpha chain (58 aa).

Topologically, residues 1 to 15 are cytoplasmic; it reads MSKFYKIWLVFDPRR. The helical transmembrane segment at 16–36 threads the bilayer; sequence VFVAQGVFLFLLAVLIHLILL. His-32 provides a ligand contact to a bacteriochlorophyll. Residues 37–58 lie on the Periplasmic side of the membrane; the sequence is STPAFNWLTVATAKHGYVAAAQ.

The protein belongs to the antenna complex alpha subunit family. The core complex is formed by different alpha and beta chains, binding bacteriochlorophyll molecules, and arranged most probably in tetrameric structures disposed around the reaction center. The non-pigmented gamma chains may constitute additional components.

The protein localises to the cell inner membrane. Antenna complexes are light-harvesting systems, which transfer the excitation energy to the reaction centers. This chain is Light-harvesting protein B-870 alpha chain (pufA), found in Rhodobacter capsulatus (Rhodopseudomonas capsulata).